Consider the following 601-residue polypeptide: Glutamine--fructose-6-phosphate aminotransferase [isomerizing] (601 aa).

Cysteine 2 (nucleophile; for GATase activity) is an active-site residue. The Glutamine amidotransferase type-2 domain maps to 2–218 (CGIVGYIGYD…DHEIVIVKKD (217 aa)). SIS domains follow at residues 284 to 423 (IIND…EHGR) and 453 to 591 (IATD…VDKP). Catalysis depends on lysine 596, which acts as the For Fru-6P isomerization activity.

In terms of assembly, homodimer.

The protein resides in the cytoplasm. It catalyses the reaction D-fructose 6-phosphate + L-glutamine = D-glucosamine 6-phosphate + L-glutamate. Functionally, catalyzes the first step in hexosamine metabolism, converting fructose-6P into glucosamine-6P using glutamine as a nitrogen source. The protein is Glutamine--fructose-6-phosphate aminotransferase [isomerizing] of Staphylococcus aureus (strain Mu50 / ATCC 700699).